Here is a 242-residue protein sequence, read N- to C-terminus: ATP synthase subunit a (242 aa).

6 consecutive transmembrane segments (helical) span residues 29-49 (SAAY…LAFS), 84-104 (FVPV…FGMI), 114-134 (IIIT…VGFV), 140-160 (FLSL…MIII), 189-209 (VIAS…IPLM), and 210-230 (VILI…FTIL).

Belongs to the ATPase A chain family. As to quaternary structure, F-type ATPases have 2 components, CF(1) - the catalytic core - and CF(0) - the membrane proton channel. CF(1) has five subunits: alpha(3), beta(3), gamma(1), delta(1), epsilon(1). CF(0) has three main subunits: a(1), b(2) and c(9-12). The alpha and beta chains form an alternating ring which encloses part of the gamma chain. CF(1) is attached to CF(0) by a central stalk formed by the gamma and epsilon chains, while a peripheral stalk is formed by the delta and b chains.

It localises to the cell inner membrane. Key component of the proton channel; it plays a direct role in the translocation of protons across the membrane. This chain is ATP synthase subunit a, found in Rickettsia bellii (strain OSU 85-389).